A 379-amino-acid polypeptide reads, in one-letter code: Sulfate adenylyltransferase (379 aa).

It belongs to the sulfate adenylyltransferase family.

The enzyme catalyses sulfate + ATP + H(+) = adenosine 5'-phosphosulfate + diphosphate. Its pathway is sulfur metabolism; hydrogen sulfide biosynthesis; sulfite from sulfate: step 1/3. The chain is Sulfate adenylyltransferase (sat) from Pyrococcus abyssi (strain GE5 / Orsay).